Consider the following 216-residue polypeptide: Elongation factor Ts (216 aa).

Residues 81-84 (TDFV) form an involved in Mg(2+) ion dislocation from EF-Tu region.

The protein belongs to the EF-Ts family.

The protein resides in the cytoplasm. Its function is as follows. Associates with the EF-Tu.GDP complex and induces the exchange of GDP to GTP. It remains bound to the aminoacyl-tRNA.EF-Tu.GTP complex up to the GTP hydrolysis stage on the ribosome. This is Elongation factor Ts from Geobacter sulfurreducens (strain ATCC 51573 / DSM 12127 / PCA).